A 381-amino-acid polypeptide reads, in one-letter code: Cytochrome b (381 aa).

The next 4 helical transmembrane spans lie at 33 to 53, 77 to 98, 113 to 133, and 178 to 198; these read FGSLLGICLVIQILTGLFLAM, WLIRNLHANGASMFFMCLFLHV, WNIGVILLLTVMATAFVGYVL, and FFAFHFILPFIIMALVIVHLL. Heme b-binding residues include His-83 and His-97. Heme b is bound by residues His-182 and His-196. His-201 is a binding site for a ubiquinone. Transmembrane regions (helical) follow at residues 226–246, 288–308, 320–340, and 347–367; these read IKDALGLMFLLLVLLTLALFS, LGGVLALLASILILLIIPLLH, VSQTLFWILTANLITLTWIGG, and FIIIGQSASILLSMLILVLMP.

It belongs to the cytochrome b family. The cytochrome bc1 complex contains 11 subunits: 3 respiratory subunits (MT-CYB, CYC1 and UQCRFS1), 2 core proteins (UQCRC1 and UQCRC2) and 6 low-molecular weight proteins (UQCRH/QCR6, UQCRB/QCR7, UQCRQ/QCR8, UQCR10/QCR9, UQCR11/QCR10 and a cleavage product of UQCRFS1). This cytochrome bc1 complex then forms a dimer. Heme b serves as cofactor.

It is found in the mitochondrion inner membrane. Functionally, component of the ubiquinol-cytochrome c reductase complex (complex III or cytochrome b-c1 complex) that is part of the mitochondrial respiratory chain. The b-c1 complex mediates electron transfer from ubiquinol to cytochrome c. Contributes to the generation of a proton gradient across the mitochondrial membrane that is then used for ATP synthesis. In Ningaui yvonnae (Southern ningaui), this protein is Cytochrome b (MT-CYB).